Consider the following 487-residue polypeptide: Serine/threonine-protein kinase 4 (487 aa).

Methionine 1 is modified (N-acetylmethionine). At threonine 3 the chain carries Phosphothreonine. The 252-residue stretch at 30 to 281 (FDVLEKLGEG…ATQLLQHPFV (252 aa)) folds into the Protein kinase domain. ATP contacts are provided by residues 36-44 (LGEGSYGSV) and lysine 59. Aspartate 149 serves as the catalytic Proton acceptor. Threonine 183 carries the post-translational modification Phosphothreonine; by autocatalysis. The residue at position 265 (serine 265) is a Phosphoserine. Residues 290-310 (LRDLINEAMDVKLKRQEAQQR) adopt a coiled-coil conformation. The tract at residues 305–337 (QEAQQREVDQDDEENSEEDELDSGTMVRAVGDE) is disordered. A compositionally biased stretch (acidic residues) spans 313 to 326 (DQDDEENSEEDELD). Serine 320 carries the phosphoserine modification. Phosphothreonine is present on residues threonine 340 and threonine 367. Threonine 387 is modified (phosphothreonine; by PKB/AKT1). Phosphoserine is present on residues serine 410 and serine 414. Position 433 is a phosphotyrosine (tyrosine 433). Residues 433–480 (YEFLKSWTVEDLQKRLLALDPMMEQEIEEIRQKYQSKRQPILDAIEAK) form the SARAH domain.

This sequence belongs to the protein kinase superfamily. STE Ser/Thr protein kinase family. STE20 subfamily. As to quaternary structure, homodimer; mediated via the coiled-coil region. Interacts with NORE1, which inhibits autoactivation. Interacts with and stabilizes SAV1. Interacts with RASSF1. Interacts with FOXO3. Interacts with RASSF2 (via SARAH domain). Interacts with AR, PKB/AKT1, TNNI3 and SIRT1. Interacts with DLG5 (via PDZ domain 3). Interacts with MARK3 and SCRIB in the presence of DLG5. The cofactor is Mg(2+). Autophosphorylated on serine and threonine residues. Phosphorylation at Thr-387 by PKB/AKT1, leads to inhibition of its: kinase activity, nuclear translocation and autophosphorylation at Thr-183. It also diminishes its cleavage by caspases and its ability to phosphorylate FOXO3. Post-translationally, proteolytically cleaved by caspase-3 during apoptosis at Asp-326 and Asp-349 resulting in a 37 kDa or a 39 kDa subunit respectively. The 39 kDa subunit is further cleaved into the 37 kDa form. Proteolytic cleavage results in kinase activation and nuclear translocation of the truncated form (MST1/N). It is less likely that cleavage at Asp-349 is a prerequisite for activation as this site is not conserved in the murine ortholog.

It is found in the cytoplasm. Its subcellular location is the nucleus. It carries out the reaction L-seryl-[protein] + ATP = O-phospho-L-seryl-[protein] + ADP + H(+). The catalysed reaction is L-threonyl-[protein] + ATP = O-phospho-L-threonyl-[protein] + ADP + H(+). Inhibited by the C-terminal non-catalytic region. Activated by caspase-cleavage. Full activation also requires homodimerization and autophosphorylation of Thr-183. Activated by RASSF1 which acts by preventing its dephosphorylation. In terms of biological role, stress-activated, pro-apoptotic kinase which, following caspase-cleavage, enters the nucleus and induces chromatin condensation followed by internucleosomal DNA fragmentation. Key component of the Hippo signaling pathway which plays a pivotal role in organ size control and tumor suppression by restricting proliferation and promoting apoptosis. The core of this pathway is composed of a kinase cascade wherein STK3/MST2 and STK4/MST1, in complex with its regulatory protein SAV1, phosphorylates and activates LATS1/2 in complex with its regulatory protein MOB1, which in turn phosphorylates and inactivates YAP1 oncoprotein and WWTR1/TAZ. Phosphorylation of YAP1 by LATS2 inhibits its translocation into the nucleus to regulate cellular genes important for cell proliferation, cell death, and cell migration. STK3/MST2 and STK4/MST1 are required to repress proliferation of mature hepatocytes, to prevent activation of facultative adult liver stem cells (oval cells), and to inhibit tumor formation. Phosphorylates 'Ser-14' of histone H2B (H2BS14ph) during apoptosis. Phosphorylates FOXO3 upon oxidative stress, which results in its nuclear translocation and cell death initiation. Phosphorylates MOBKL1A, MOBKL1B and RASSF2. Phosphorylates TNNI3 (cardiac Tn-I) and alters its binding affinity to TNNC1 (cardiac Tn-C) and TNNT2 (cardiac Tn-T). Phosphorylates FOXO1 on 'Ser-212' and regulates its activation and stimulates transcription of PMAIP1 in a FOXO1-dependent manner. Phosphorylates SIRT1 and inhibits SIRT1-mediated p53/TP53 deacetylation, thereby promoting p53/TP53 dependent transcription and apoptosis upon DNA damage. Acts as an inhibitor of PKB/AKT1. Phosphorylates AR on 'Ser-650' and suppresses its activity by intersecting with PKB/AKT1 signaling and antagonizing formation of AR-chromatin complexes. The protein is Serine/threonine-protein kinase 4 (STK4) of Otolemur garnettii (Small-eared galago).